We begin with the raw amino-acid sequence, 97 residues long: MRISATLLCLLLIAAAFSIQVWAQPDGPNASTCCYVKKQKIPKRNLKSYRRITSSRCPWEAVIFKTKKGMEVCAEAHQKWVEEAIAYLDMKTPTPKP.

The first 23 residues, 1–23, serve as a signal peptide directing secretion; sequence MRISATLLCLLLIAAAFSIQVWA. Position 24 is a pyrrolidone carboxylic acid (Q24). An N-linked (GlcNAc...) asparagine glycan is attached at N29. Disulfide bonds link C33-C57 and C34-C73.

This sequence belongs to the intercrine beta (chemokine CC) family. In terms of assembly, monomer. Interacts with TNFAIP6 (via Link domain).

It localises to the secreted. Chemotactic factor that attracts monocytes and eosinophils, but not neutrophils. Augments monocyte anti-tumor activity. The chain is C-C motif chemokine 7 (Ccl7) from Mus musculus (Mouse).